The following is an 869-amino-acid chain: Leucine--tRNA ligase (869 aa).

The 'HIGH' region signature appears at 42 to 52 (PYPSGNLHMGH). The 'KMSKS' region motif lies at 622–626 (KMSKS). Lysine 625 contributes to the ATP binding site.

This sequence belongs to the class-I aminoacyl-tRNA synthetase family.

It localises to the cytoplasm. The enzyme catalyses tRNA(Leu) + L-leucine + ATP = L-leucyl-tRNA(Leu) + AMP + diphosphate. The chain is Leucine--tRNA ligase from Synechocystis sp. (strain ATCC 27184 / PCC 6803 / Kazusa).